A 106-amino-acid polypeptide reads, in one-letter code: Iron-sulfur cluster assembly protein CyaY (106 aa).

It belongs to the frataxin family. In terms of assembly, interacts with IscS. Certain pairs of proteins can bind simultaneously to IscS; IscS-IscU-CyaY complexes can be isolated in vitro, but (IscS-TusA-CyaY) complexes cannot.

Involved in iron-sulfur (Fe-S) cluster assembly. May act as a regulator of Fe-S biogenesis. In Escherichia coli O157:H7, this protein is Iron-sulfur cluster assembly protein CyaY.